The following is a 686-amino-acid chain: Glycine--tRNA ligase beta subunit (686 aa).

This sequence belongs to the class-II aminoacyl-tRNA synthetase family. Tetramer of two alpha and two beta subunits.

The protein resides in the cytoplasm. The enzyme catalyses tRNA(Gly) + glycine + ATP = glycyl-tRNA(Gly) + AMP + diphosphate. This chain is Glycine--tRNA ligase beta subunit, found in Halothermothrix orenii (strain H 168 / OCM 544 / DSM 9562).